The primary structure comprises 372 residues: MKISPEILNLVPYKPGKPISETQREYGLTTVYKLASNENPLGPSPKAMAAVKQALDHQHLYPDPSHYELLQTLSKEWGFPTKQLAIGNGSDELIDLLCRIYCEHHDGVLTSAAAFNAYEVSAPANRAVIHKVPMAEGYRFDLPAIADYFLKHPEKNIRLIFVSNPNNPTGTYATKAEVEAFLQKVGNRDDVMIIFDEAYNEFVRAKDYASAQGYMGQYKNLIVLRTFSKIYGLAGFRLGAMIAPPEVVEVFNRVRKPFNVNDLAQVAANAALQDKEFIERSQQICWKGLDYFYKKLEELGLPYIPSQGNFVMFDTLRDAAKVNEALLRRGIIMRPLLNYGFKTHLRLSVGRDHENEAAMVALAEVLKEITPL.

Residue Lys-229 is modified to N6-(pyridoxal phosphate)lysine.

It belongs to the class-II pyridoxal-phosphate-dependent aminotransferase family. Histidinol-phosphate aminotransferase subfamily. Homodimer. The cofactor is pyridoxal 5'-phosphate.

It carries out the reaction L-histidinol phosphate + 2-oxoglutarate = 3-(imidazol-4-yl)-2-oxopropyl phosphate + L-glutamate. The protein operates within amino-acid biosynthesis; L-histidine biosynthesis; L-histidine from 5-phospho-alpha-D-ribose 1-diphosphate: step 7/9. This Bdellovibrio bacteriovorus (strain ATCC 15356 / DSM 50701 / NCIMB 9529 / HD100) protein is Histidinol-phosphate aminotransferase.